A 161-amino-acid polypeptide reads, in one-letter code: UPF0178 protein Rsph17025_3122 (161 aa).

Belongs to the UPF0178 family.

In Cereibacter sphaeroides (strain ATCC 17025 / ATH 2.4.3) (Rhodobacter sphaeroides), this protein is UPF0178 protein Rsph17025_3122.